The primary structure comprises 928 residues: Outer membrane protein SlpA (928 aa).

Residues 1-23 form the signal peptide; that stretch reads MKKRLVTLLAGLLTVLSMGFGLA. The SLH domain occupies 24–84; sequence QFSDVPAGHW…QQIEEELKTQ (61 aa).

As to quaternary structure, homotrimer.

The protein localises to the cell outer membrane. In terms of biological role, plays an important role in the structural organization and integrity of the cell envelope, bridging the outer membrane to the peptidoglyan layer. Appears to be a nonselective channel. In Thermus thermophilus (strain ATCC 27634 / DSM 579 / HB8), this protein is Outer membrane protein SlpA (slpA).